The sequence spans 702 residues: Pentatricopeptide repeat-containing protein At4g16390, chloroplastic (702 aa).

A chloroplast-targeting transit peptide spans 1–53; it reads MSFHHLCSSPSSLLHDPLPLCNLLSVYPKSTPRSFLSSYNPNSSHFHSRNLLQ. PPR repeat units follow at residues 174-208, 209-243, 244-278, 279-313, 314-348, 349-383, 384-414, 420-454, and 455-489; these read EVIL…GIKP, DNAT…GCEP, DNVT…KWRI, DAVT…GVKP, NLVI…GFTP, NWST…GLSL, TVIL…MKNC, DSWT…GFEP, and TLFV…GITP. The 86-residue stretch at 603–688 folds into the Smr domain; sequence LHLKSLSLGA…WFLTTSVAAK (86 aa).

Belongs to the PPR family. P subfamily. As to expression, expressed in leaves and flowers and at lower levels in stems and flower buds.

The protein resides in the plastid. Its subcellular location is the chloroplast. In terms of biological role, involved in chloroplast RNA processing. Can bind RNA. Involved in chloroplast development. Involved in chloroplast ribosomal RNA (rRNA) processing and/or translation. Required for FtsH-mediated chloroplast biogenesis. Involved in translation and accumulation of chloroplast ATP synthase subunits. The protein is Pentatricopeptide repeat-containing protein At4g16390, chloroplastic of Arabidopsis thaliana (Mouse-ear cress).